Reading from the N-terminus, the 101-residue chain is Large ribosomal subunit protein uL24 (101 aa).

Belongs to the universal ribosomal protein uL24 family. As to quaternary structure, part of the 50S ribosomal subunit.

In terms of biological role, one of two assembly initiator proteins, it binds directly to the 5'-end of the 23S rRNA, where it nucleates assembly of the 50S subunit. Functionally, one of the proteins that surrounds the polypeptide exit tunnel on the outside of the subunit. The polypeptide is Large ribosomal subunit protein uL24 (Cereibacter sphaeroides (strain ATCC 17029 / ATH 2.4.9) (Rhodobacter sphaeroides)).